The chain runs to 387 residues: MTSHPVFIDLSLDEQVQELRKYFKKLGAEISSEKSNKGVEDDLHKIIGVCDVCFKDGEPSQIDGILNSIVSIMITIPLDRGENIVLAYCEKMTKAPNLPLGKVCLQSLWRLFNNLDTASPLRYHVYYHLVQVAKQCEQVLEVFTGVDQLKSQFANCPPSSEQMQKLYRLLHDVTKDTNLELSSKVMIELLGTYTADNACVAREDAMKCIVTALADPNTFLLDPLLALKPVRFLEGDLIHDLLSIFVSEKLPAYVQFYEDHREFVNSQGLNHEQNMKKMRLLTFMQLAESSPEMTFETLTKELQINEDEVEPFVIEVLKTKLVRARLDQANHKVHITSTMHRTFGAPQWEQLRDLLQAWKENLSTVREGLTSVSSAQLDLARSQKLIH.

Residues 181-340 form the PCI domain; it reads LSSKVMIELL…HKVHITSTMH (160 aa).

This sequence belongs to the eIF-3 subunit M family. As to quaternary structure, component of the eukaryotic translation initiation factor 3 (eIF-3) complex. The eIF-3 complex interacts with pix.

It is found in the cytoplasm. It localises to the golgi apparatus. Its function is as follows. Component of the eukaryotic translation initiation factor 3 (eIF-3) complex, which is involved in protein synthesis of a specialized repertoire of mRNAs and, together with other initiation factors, stimulates binding of mRNA and methionyl-tRNAi to the 40S ribosome. The eIF-3 complex specifically targets and initiates translation of a subset of mRNAs involved in cell proliferation. This chain is Eukaryotic translation initiation factor 3 subunit M, found in Drosophila erecta (Fruit fly).